We begin with the raw amino-acid sequence, 377 residues long: MSEMDYYEVLEVSRDCSGAELKKAYRKLALKYHPDRNPDDQEAEEKFKIVNEAYQVLSDDEKRTIYDRYGKEGLEGQGMGGGFGGANMDDIMDIFNSMFGGGGGGFGGFGRTRRDPSQKYALDFEIELPLAFNEAVFGCEKKIDITYKTPCEECGGTGAKDGKMETCDYCGGQGQVLMRQGPMQFAQTCPKCHGEGRKIAQKCPSCQGKGYHEETETVTIKVPAGVDSGNRLRVPGHGNEAKNGQRGDLYLTFYVEEDEHFIRNGNDIYIEVPVFFTQAILGETISIPTLDGELELELKQSTKDKEQFIFEGEGVPDVHNGRKGRLIAQVRMILPKKINEEQKELLEKLQESYGVESRPHKSTFESAFDKVKNWFKN.

In terms of domain architecture, J spans 5–70 (DYYEVLEVSR…EKRTIYDRYG (66 aa)). The segment at 138-215 (GCEKKIDITY…CQGKGYHEET (78 aa)) adopts a CR-type zinc-finger fold. Zn(2+) is bound by residues cysteine 151, cysteine 154, cysteine 167, cysteine 170, cysteine 189, cysteine 192, cysteine 203, and cysteine 206. 4 CXXCXGXG motif repeats span residues 151 to 158 (CEECGGTG), 167 to 174 (CDYCGGQG), 189 to 196 (CPKCHGEG), and 203 to 210 (CPSCQGKG).

Belongs to the DnaJ family. As to quaternary structure, homodimer. Zn(2+) serves as cofactor.

Its subcellular location is the cytoplasm. Participates actively in the response to hyperosmotic and heat shock by preventing the aggregation of stress-denatured proteins and by disaggregating proteins, also in an autonomous, DnaK-independent fashion. Unfolded proteins bind initially to DnaJ; upon interaction with the DnaJ-bound protein, DnaK hydrolyzes its bound ATP, resulting in the formation of a stable complex. GrpE releases ADP from DnaK; ATP binding to DnaK triggers the release of the substrate protein, thus completing the reaction cycle. Several rounds of ATP-dependent interactions between DnaJ, DnaK and GrpE are required for fully efficient folding. Also involved, together with DnaK and GrpE, in the DNA replication of plasmids through activation of initiation proteins. The protein is Chaperone protein DnaJ of Sulfurovum sp. (strain NBC37-1).